The following is a 273-amino-acid chain: 1,4-dihydroxy-2-naphthoyl-CoA synthase (273 aa).

Substrate contacts are provided by residues Arg-34, 73-77 (SGGDQ), Tyr-85, 117-121 (YAVGG), Thr-143, Ser-149, Tyr-246, and Lys-261. 142-144 (QTG) contacts hydrogencarbonate. The segment covering 254–265 (GRDAFKEKRDPD) has biased composition (basic and acidic residues). Residues 254 to 273 (GRDAFKEKRDPDFDQFPKFP) are disordered.

It belongs to the enoyl-CoA hydratase/isomerase family. MenB subfamily. It depends on hydrogencarbonate as a cofactor.

The catalysed reaction is 2-succinylbenzoyl-CoA + H(+) = 1,4-dihydroxy-2-naphthoyl-CoA + H2O. The protein operates within quinol/quinone metabolism; 1,4-dihydroxy-2-naphthoate biosynthesis; 1,4-dihydroxy-2-naphthoate from chorismate: step 6/7. It functions in the pathway quinol/quinone metabolism; menaquinone biosynthesis. Functionally, converts o-succinylbenzoyl-CoA (OSB-CoA) to 1,4-dihydroxy-2-naphthoyl-CoA (DHNA-CoA). The chain is 1,4-dihydroxy-2-naphthoyl-CoA synthase from Staphylococcus aureus (strain MSSA476).